We begin with the raw amino-acid sequence, 166 residues long: Phospholipase A2 inhibitor (166 aa).

The first 19 residues, 1-19 (MRLILLSGLLLLGIFLANG), serve as a signal peptide directing secretion. The C-type lectin domain maps to 46-161 (LKGSFLIVHK…CDDNLLVVCE (116 aa)). Intrachain disulfides connect Cys-83-Cys-160 and Cys-138-Cys-152. Asn-122 is a glycosylation site (N-linked (GlcNAc...) asparagine).

It belongs to the alpha-type phospholipase A2 inhibitor family. Homotrimer; non-covalently linked. In terms of tissue distribution, expressed by the liver.

It localises to the secreted. Functionally, this phospholipase A2 inhibitor binds directly phospholipase A2 in the presence or absence of calcium. This chain is Phospholipase A2 inhibitor, found in Bothrops jararacussu (Jararacussu).